A 401-amino-acid chain; its full sequence is Phosphoglycerate kinase (401 aa).

Substrate is bound by residues 20-22 (DFN), arginine 35, 58-61 (HLGR), arginine 117, and arginine 154. Residues lysine 204, glycine 298, glutamate 329, and 358–361 (GGDS) contribute to the ATP site.

The protein belongs to the phosphoglycerate kinase family. In terms of assembly, monomer.

Its subcellular location is the cytoplasm. It catalyses the reaction (2R)-3-phosphoglycerate + ATP = (2R)-3-phospho-glyceroyl phosphate + ADP. Its pathway is carbohydrate degradation; glycolysis; pyruvate from D-glyceraldehyde 3-phosphate: step 2/5. This chain is Phosphoglycerate kinase, found in Bifidobacterium longum (strain DJO10A).